The primary structure comprises 156 residues: MTIQIDFIDETNEVTAEQIETLEQLIREAAAVENVPEGAEVSVSFVDNERIRVMNRDYRGKDAPTDVLSFALEEEGEGEIDIIGADVPPVLGDIIISIPKAKEQAAEYGHSFMRELGFLAVHGFLHLLGYDHETEEEERVMFAKQEEILTRFGLTR.

Residues His-122, His-126, and His-132 each contribute to the Zn(2+) site.

Belongs to the endoribonuclease YbeY family. The cofactor is Zn(2+).

It localises to the cytoplasm. Its function is as follows. Single strand-specific metallo-endoribonuclease involved in late-stage 70S ribosome quality control and in maturation of the 3' terminus of the 16S rRNA. This is Endoribonuclease YbeY from Geobacillus thermodenitrificans (strain NG80-2).